The chain runs to 469 residues: Glutamate--tRNA ligase (469 aa).

Residues Pro11–Asn21 carry the 'HIGH' region motif. A compositionally biased stretch (basic and acidic residues) spans Gly118 to Pro131. Residues Gly118–Pro139 are disordered. A 'KMSKS' region motif is present at residues Lys243–Arg247. Residue Lys246 coordinates ATP.

This sequence belongs to the class-I aminoacyl-tRNA synthetase family. Glutamate--tRNA ligase type 1 subfamily. Monomer.

Its subcellular location is the cytoplasm. It carries out the reaction tRNA(Glu) + L-glutamate + ATP = L-glutamyl-tRNA(Glu) + AMP + diphosphate. Catalyzes the attachment of glutamate to tRNA(Glu) in a two-step reaction: glutamate is first activated by ATP to form Glu-AMP and then transferred to the acceptor end of tRNA(Glu). The polypeptide is Glutamate--tRNA ligase (Burkholderia pseudomallei (strain 1106a)).